The primary structure comprises 487 residues: Transmembrane protein 161B (487 aa).

N34 is a glycosylation site (N-linked (GlcNAc...) asparagine). The helical transmembrane segment at 107-127 (LVDFTVAATVVYLVTEVYYNF) threads the bilayer. Residue N135 is glycosylated (N-linked (GlcNAc...) asparagine). 2 helical membrane passes run 136-156 (ISLVWCLLVLSFAIKVLFSLT) and 169-189 (SVCVTFGFFFFVKAMAVLIVT). N-linked (GlcNAc...) asparagine glycosylation occurs at N203. 5 consecutive transmembrane segments (helical) span residues 228–248 (FKFFLAIFCSFIGAFLTFPGL), 265–285 (ITQTLLHINFLAPLFMVLLWV), 305–325 (LMTEATFDTLRLWLIILLCAL), 367–387 (VFYYLCVIALQYVAPLVMLLH), and 459–479 (LSFLTWWIAACLFSTSLFGLF).

It belongs to the TMEM161 family.

Its subcellular location is the cell membrane. Its function is as follows. Essential for maintaining normal cardiac rhythm in the developing heart and for neonatal survival. Inhibits potassium and calcium currents in the cardiomyocytes, this assists in timely action potential repolarization and thereby maintains normal cardiac rhythm. This chain is Transmembrane protein 161B (TMEM161B), found in Homo sapiens (Human).